Here is a 94-residue protein sequence, read N- to C-terminus: Alpha-elapitoxin-Nss2a (94 aa).

The first 21 residues, 1 to 21, serve as a signal peptide directing secretion; that stretch reads MKTLLLTLVVVTIVCLDLGDS. 5 disulfides stabilise this stretch: Cys24–Cys41, Cys34–Cys62, Cys47–Cys51, Cys66–Cys77, and Cys78–Cys83.

It belongs to the three-finger toxin family. Long-chain subfamily. Type II alpha-neurotoxin sub-subfamily. In terms of tissue distribution, expressed by the venom gland.

The protein resides in the secreted. Functionally, binds with high affinity to muscular (alpha-1/CHRNA1) and neuronal (alpha-7/CHRNA7) nicotinic acetylcholine receptor (nAChR) and inhibits acetylcholine from binding to the receptor, thereby impairing neuromuscular and neuronal transmission. The polypeptide is Alpha-elapitoxin-Nss2a (Notechis scutatus scutatus (Mainland tiger snake)).